Here is a 136-residue protein sequence, read N- to C-terminus: Small ribosomal subunit protein uS9 (136 aa).

The tract at residues 97–136 (SPDNRKPLKTEGHLSRDPRAKERRKYGLKKARKAPQFSKR) is disordered. The span at 98 to 116 (PDNRKPLKTEGHLSRDPRA) shows a compositional bias: basic and acidic residues. Residues 117–136 (KERRKYGLKKARKAPQFSKR) show a composition bias toward basic residues.

It belongs to the universal ribosomal protein uS9 family.

In Prochlorococcus marinus (strain MIT 9215), this protein is Small ribosomal subunit protein uS9.